A 305-amino-acid chain; its full sequence is Protoheme IX farnesyltransferase (305 aa).

A run of 9 helical transmembrane segments spans residues 28-48, 52-72, 101-121, 122-142, 149-169, 174-194, 218-238, 240-260, and 283-303; these read IIEL…QGVP, LVLL…ALNM, LAFG…TVNW, LSAW…TMIL, NIVW…SSVT, WAPV…YWPL, VVAR…LLLT, LGYT…FWLW, and LFHW…VDPF.

The protein belongs to the UbiA prenyltransferase family. Protoheme IX farnesyltransferase subfamily.

It localises to the cell membrane. The enzyme catalyses heme b + (2E,6E)-farnesyl diphosphate + H2O = Fe(II)-heme o + diphosphate. The protein operates within porphyrin-containing compound metabolism; heme O biosynthesis; heme O from protoheme: step 1/1. Functionally, converts heme B (protoheme IX) to heme O by substitution of the vinyl group on carbon 2 of heme B porphyrin ring with a hydroxyethyl farnesyl side group. The protein is Protoheme IX farnesyltransferase of Streptomyces avermitilis (strain ATCC 31267 / DSM 46492 / JCM 5070 / NBRC 14893 / NCIMB 12804 / NRRL 8165 / MA-4680).